A 193-amino-acid chain; its full sequence is MAASAWLEAGLARVLFYPTLLYTVFRGRVRGPAHRDWYHRIDHTVLLGALPLKNMTRRLVLDENVRGVITMNEEYETRFLCNTSKEWKKAGVEQLRLSTVDMTGVPTLANLHKGVQFALKYQALGQCVYVHCKAGRSRSATMVAAYLIQVHNWSPEEAIEAIAKIRSHISIRPSQLEVLKEFHKEITARAAKN.

The transit peptide at 1-31 directs the protein to the mitochondrion; that stretch reads MAASAWLEAGLARVLFYPTLLYTVFRGRVRG. Residues 37–188 form the Tyrosine-protein phosphatase domain; it reads WYHRIDHTVL…LKEFHKEITA (152 aa). Lys-85 is subject to N6-succinyllysine. Catalysis depends on Cys-132, which acts as the Phosphocysteine intermediate.

Belongs to the protein-tyrosine phosphatase family. Non-receptor class dual specificity subfamily. Interacts with STYXL1; the interaction inhibits PTPMT1 catalytic activity. As to expression, predominantly expressed in testis. Expressed at lower level in heart, brain, spleen, lung, liver, skeletal muscle, kidney, bone marrow, eye, lymph node, smooth muscle, prostate, thymus, stomach and uterus.

The protein localises to the mitochondrion inner membrane. It carries out the reaction a 1,2-diacyl-sn-glycero-3-phospho-(1'-sn-glycero-3'-phosphate) + H2O = a 1,2-diacyl-sn-glycero-3-phospho-(1'-sn-glycerol) + phosphate. It catalyses the reaction O-phospho-L-tyrosyl-[protein] + H2O = L-tyrosyl-[protein] + phosphate. The enzyme catalyses O-phospho-L-seryl-[protein] + H2O = L-seryl-[protein] + phosphate. The catalysed reaction is O-phospho-L-threonyl-[protein] + H2O = L-threonyl-[protein] + phosphate. It carries out the reaction 1,2-di-(9Z-octadecenoyl)-sn-glycero-3-phospho-(1'-sn-glycerol-3'-phosphate) + H2O = 1,2-di-(9Z-octadecenoyl)-sn-glycero-3-phospho-(1'-sn-glycerol) + phosphate. It catalyses the reaction 1,2-dioctanoyl-sn-glycero-3-phospho-(1D-myo-inositol-5-phosphate) + H2O = 1,2-dioctanoyl-sn-glycero-3-phospho-(1D-myo-inositol) + phosphate. The enzyme catalyses a 1-acyl-2-hexanoyl-sn-glycero-3-phospho-(1D-myo-inositol-5-phosphate) + H2O = a 1-acyl-2-hexanoyl-sn-glycero-3-phospho-(1D-myo-inositol) + phosphate. The catalysed reaction is 1,2-dibutyryl-sn-glycero-3-phospho-(1D-myo-inositol-5-phosphate) + H2O = 1,2-dibutyryl-sn-glycero-3-phospho-(1D-myo-inositol) + phosphate. It functions in the pathway phospholipid metabolism; phosphatidylglycerol biosynthesis; phosphatidylglycerol from CDP-diacylglycerol: step 2/2. Its function is as follows. Lipid phosphatase which dephosphorylates phosphatidylglycerophosphate (PGP) to phosphatidylglycerol (PG). PGP is an essential intermediate in the biosynthetic pathway of cardiolipin, a mitochondrial-specific phospholipid regulating the membrane integrity and activities of the organelle. Has also been shown to display phosphatase activity toward phosphoprotein substrates, specifically mediates dephosphorylation of mitochondrial proteins, thereby playing an essential role in ATP production. Has probably a preference for proteins phosphorylated on Ser and/or Thr residues compared to proteins phosphorylated on Tyr residues. Probably involved in regulation of insulin secretion in pancreatic beta cells. May prevent intrinsic apoptosis, probably by regulating mitochondrial membrane integrity. The sequence is that of Phosphatidylglycerophosphatase and protein-tyrosine phosphatase 1 from Mus musculus (Mouse).